Consider the following 591-residue polypeptide: Pentatricopeptide repeat-containing protein At2g35130 (591 aa).

12 PPR repeats span residues 154 to 188, 189 to 223, 227 to 262, 263 to 297, 298 to 332, 333 to 367, 368 to 402, 403 to 437, 438 to 472, 473 to 507, 508 to 542, and 543 to 573; these read DVIC…RYVP, TEDT…HVSP, GVTV…RCKP, TTET…QCKP, NICT…GLEP, DVYV…GCEP, DRAS…GIAP, TMKS…GVEP, DTFV…PCTA, DIST…NFRP, DVVT…GCAP, and DGGT…MHKG.

It belongs to the PPR family. P subfamily.

In Arabidopsis thaliana (Mouse-ear cress), this protein is Pentatricopeptide repeat-containing protein At2g35130.